A 382-amino-acid polypeptide reads, in one-letter code: Lipid-A-disaccharide synthase (382 aa).

This sequence belongs to the LpxB family.

The enzyme catalyses 2-N,3-O-bis[(3R)-3-hydroxytetradecanoyl]-alpha-D-glucosaminyl 1-phosphate + UDP-2-N,3-O-bis[(3R)-3-hydroxytetradecanoyl]-alpha-D-glucosamine = lipid A disaccharide (E. coli) + UDP + H(+). The catalysed reaction is a lipid X + a UDP-2-N,3-O-bis[(3R)-3-hydroxyacyl]-alpha-D-glucosamine = a lipid A disaccharide + UDP + H(+). The protein operates within glycolipid biosynthesis; lipid IV(A) biosynthesis; lipid IV(A) from (3R)-3-hydroxytetradecanoyl-[acyl-carrier-protein] and UDP-N-acetyl-alpha-D-glucosamine: step 5/6. In terms of biological role, condensation of UDP-2,3-diacylglucosamine and 2,3-diacylglucosamine-1-phosphate to form lipid A disaccharide, a precursor of lipid A, a phosphorylated glycolipid that anchors the lipopolysaccharide to the outer membrane of the cell. This chain is Lipid-A-disaccharide synthase, found in Shigella flexneri serotype 5b (strain 8401).